A 210-amino-acid chain; its full sequence is C4-dicarboxylate TRAP transporter small permease protein DctQ (210 aa).

4 helical membrane-spanning segments follow: residues 13–33 (EGLI…YVVL), 77–97 (ALFA…AGHL), 113–133 (VLGV…CVAS), and 160–180 (IGLI…EILV).

It belongs to the TRAP transporter small permease family. As to quaternary structure, the complex comprises the extracytoplasmic solute receptor protein DctP, and the two transmembrane proteins DctQ and DctM.

Its subcellular location is the cell inner membrane. In terms of biological role, part of the tripartite ATP-independent periplasmic (TRAP) transport system DctPQM involved in C4-dicarboxylates uptake. This Pseudomonas aeruginosa (strain ATCC 15692 / DSM 22644 / CIP 104116 / JCM 14847 / LMG 12228 / 1C / PRS 101 / PAO1) protein is C4-dicarboxylate TRAP transporter small permease protein DctQ.